A 702-amino-acid chain; its full sequence is Polyribonucleotide nucleotidyltransferase 3 (702 aa).

Mg(2+) is bound by residues Asp483 and Asp489. The 60-residue stretch at 550-609 (PKVTQIKVHPDKVREVIGAGGKVINKIIDETGCKITIENDGTIYVAAPDQESSRRAVEMI) folds into the KH domain. Residues 619 to 687 (GEVYTGKVIK…PQGKIGLSRK (69 aa)) form the S1 motif domain.

Belongs to the polyribonucleotide nucleotidyltransferase family. The cofactor is Mg(2+).

Its subcellular location is the cytoplasm. The enzyme catalyses RNA(n+1) + phosphate = RNA(n) + a ribonucleoside 5'-diphosphate. Involved in mRNA degradation. Catalyzes the phosphorolysis of single-stranded polyribonucleotides processively in the 3'- to 5'-direction. In Alkaliphilus metalliredigens (strain QYMF), this protein is Polyribonucleotide nucleotidyltransferase 3.